The sequence spans 207 residues: 3,4-dihydroxy-2-butanone 4-phosphate synthase (207 aa).

Residues 28–29 (RE), Asp-33, 140–144 (RRGHT), and Glu-164 contribute to the D-ribulose 5-phosphate site. Glu-29 is a Mg(2+) binding site. His-143 serves as a coordination point for Mg(2+).

This sequence belongs to the DHBP synthase family. As to quaternary structure, homodimer. Requires Mg(2+) as cofactor. The cofactor is Mn(2+).

It catalyses the reaction D-ribulose 5-phosphate = (2S)-2-hydroxy-3-oxobutyl phosphate + formate + H(+). Its pathway is cofactor biosynthesis; riboflavin biosynthesis; 2-hydroxy-3-oxobutyl phosphate from D-ribulose 5-phosphate: step 1/1. Catalyzes the conversion of D-ribulose 5-phosphate to formate and 3,4-dihydroxy-2-butanone 4-phosphate. The polypeptide is 3,4-dihydroxy-2-butanone 4-phosphate synthase (Oceanobacillus iheyensis (strain DSM 14371 / CIP 107618 / JCM 11309 / KCTC 3954 / HTE831)).